The chain runs to 369 residues: Glutamate 5-kinase (369 aa).

Lys9 provides a ligand contact to ATP. Positions 49, 136, and 148 each coordinate substrate. ATP contacts are provided by residues 168 to 169 (TD) and 210 to 216 (TGGMLTK). Residues 275–355 (QGSIWVDKGA…KGVLIYRDDW (81 aa)) form the PUA domain.

Belongs to the glutamate 5-kinase family.

The protein resides in the cytoplasm. It carries out the reaction L-glutamate + ATP = L-glutamyl 5-phosphate + ADP. Its pathway is amino-acid biosynthesis; L-proline biosynthesis; L-glutamate 5-semialdehyde from L-glutamate: step 1/2. Its function is as follows. Catalyzes the transfer of a phosphate group to glutamate to form L-glutamate 5-phosphate. This is Glutamate 5-kinase from Streptococcus pneumoniae (strain Hungary19A-6).